The sequence spans 1254 residues: Histone-lysine N-methyltransferase eggless (1254 aa).

Disordered regions lie at residues 24–209 and 228–248; these read ALVE…EIPR and PVPR…SKTT. Basic and acidic residues-rich tracts occupy residues 40–57 and 65–81; these read TPEK…KDLT and KSQE…KDPE. The span at 112–125 shows a compositional bias: low complexity; that stretch reads SVELLESPLKSPSS. Residues 136-162 are compositionally biased toward basic and acidic residues; that stretch reads LEEKEKPGPAKELEPKESEPDSKESSK. A compositionally biased stretch (polar residues) spans 172 to 181; the sequence is ELISSPTSDD. 2 stretches are compositionally biased toward basic and acidic residues: residues 182–197 and 234–243; these read SLAK…EHGQ and AMQESKETQK. A coiled-coil region spans residues 391 to 416; it reads TILQAKIERLAKKFEEVDLQLAQVQG. 2 Tudor domains span residues 535-607 and 634-691; these read RLPI…SEKV and QCTK…KETQ. The interval 734–760 is disordered; it reads ARKSTSKSGSPASTAAPPTGSSSSSAV. Over residues 739–759 the composition is skewed to low complexity; sequence SKSGSPASTAAPPTGSSSSSA. One can recognise an MBD domain in the interval 811 to 877; the sequence is LDSYSPLSKP…DNFDFTPDLR (67 aa). Residues 939–1011 enclose the Pre-SET domain; the sequence is VCCDCEDDCS…NCLNRVVQHS (73 aa). Zn(2+)-binding residues include C941, C943, C947, C953, C955, C993, C997, C999, and C1003. Residues 1014–1229 enclose the SET domain; the sequence is MKLQVFKTSN…SGTELTWNYN (216 aa). S-adenosyl-L-methionine is bound by residues 1024–1026, D1062, and Y1064; that span reads RGW. A compositionally biased stretch (basic and acidic residues) spans 1081–1090; the sequence is YESDVERADL. A disordered region spans residues 1081–1139; it reads YESDVERADLDHEDDNYGPDAEDDDDFRPNNYYQKKKEKLRSSRSNSSSTQNTELDSQE. Residues 1091-1106 show a composition bias toward acidic residues; that stretch reads DHEDDNYGPDAEDDDD. Positions 1123–1134 are enriched in low complexity; sequence SRSNSSSTQNTE. S-adenosyl-L-methionine-binding positions include R1183 and 1186 to 1187; that span reads NH. Residues C1189, C1242, C1244, and C1249 each coordinate Zn(2+). The Post-SET domain maps to 1238-1254; it reads KVLYCQCGAQNCRVRLL.

The protein belongs to the class V-like SAM-binding methyltransferase superfamily. Histone-lysine methyltransferase family. Suvar3-9 subfamily.

The protein resides in the nucleus. Its subcellular location is the chromosome. It catalyses the reaction L-lysyl(9)-[histone H3] + 3 S-adenosyl-L-methionine = N(6),N(6),N(6)-trimethyl-L-lysyl(9)-[histone H3] + 3 S-adenosyl-L-homocysteine + 3 H(+). Functionally, histone methyltransferase that specifically trimethylates 'Lys-9' of histone H3 in ovary. H3 'Lys-9' trimethylation represents a specific tag for epigenetic transcriptional repression by recruiting Su(var)205/HP1 to methylated histones. Plays a central role during oogenesis. This Drosophila pseudoobscura pseudoobscura (Fruit fly) protein is Histone-lysine N-methyltransferase eggless (egg).